Here is a 516-residue protein sequence, read N- to C-terminus: Acyl-lipid (7-3)-desaturase, chloroplastic (516 aa).

The interval 1-25 (MNATMQRSAVAGRTSGKVATTARAS) is disordered. The transit peptide at 1-47 (MNATMQRSAVAGRTSGKVATTARASSMARPRLPIAGRVARRSAVTVR) directs the protein to the chloroplast. The region spanning 83 to 148 (WTVYRGVAYD…LADFPVDAVP (66 aa)) is the Cytochrome b5 heme-binding domain. Heme-binding residues include His100 and His123. A run of 2 helical transmembrane segments spans residues 186–206 (GAAFAVLGYAAAMYALYTYDA) and 209–229 (LTGALLGLGGAWIGLTIQHCG). Positions 227–231 (HCGNH) match the Histidine box-1 motif. The short motif at 262 to 267 (HQVSHH) is the Histidine box-2 element. Helical transmembrane passes span 305-325 (MWALFPFLQLVFQIGDWQALL), 354-374 (FLLYGLPAFLHGPTAMLGGAA), 375-395 (GYLFTQSIVLAATFAVSHNVP), and 423-443 (VLTSANWGGVIGNFFTGGLNL). Positions 444-448 (QIEHH) match the Histidine box-3 motif.

It belongs to the fatty acid desaturase type 1 family. It depends on Fe(2+) as a cofactor.

It localises to the plastid. The protein localises to the chloroplast membrane. It carries out the reaction a (7Z,10Z,13Z,16Z,19Z)-docosapentaenoyl-containing glycerolipid + 2 Fe(II)-[cytochrome b5] + O2 + 2 H(+) = a (4Z,7Z,10Z,13Z,16Z,19Z)-docosahexaenoyl-containing glycerolipid + 2 Fe(III)-[cytochrome b5] + 2 H2O. The catalysed reaction is a (7Z,10Z,13Z,16Z)-docosatetraenoyl-containing glycerolipid + 2 Fe(II)-[cytochrome b5] + O2 + 2 H(+) = a (4Z,7Z,10Z,13Z,16Z)-docosapentaenoyl-containing glycerolipid + 2 Fe(III)-[cytochrome b5] + 2 H2O. Fatty acid desaturase that introduces a cis double bond at the 4-position in 16-carbon polyunsaturated fatty acids that contain a Delta(7) double bond, resulting in the production of 16 carbon fatty acid (7Z,10Z,13Z)-hexadeca-7,10,13-trienoate. This Chlamydomonas reinhardtii (Chlamydomonas smithii) protein is Acyl-lipid (7-3)-desaturase, chloroplastic.